A 264-amino-acid polypeptide reads, in one-letter code: Phosphonoacetaldehyde hydrolase (264 aa).

The Nucleophile role is filled by Asp-9. Residues Asp-9 and Ala-11 each contribute to the Mg(2+) site. The active-site Schiff-base intermediate with substrate is the Lys-50. Asp-183 is a Mg(2+) binding site.

This sequence belongs to the HAD-like hydrolase superfamily. PhnX family. Homodimer. Mg(2+) serves as cofactor.

It carries out the reaction phosphonoacetaldehyde + H2O = acetaldehyde + phosphate + H(+). In terms of biological role, involved in phosphonate degradation. The chain is Phosphonoacetaldehyde hydrolase from Bacillus cereus (strain AH820).